We begin with the raw amino-acid sequence, 240 residues long: Regulatory protein RecX (240 aa).

It belongs to the RecX family.

Its subcellular location is the cytoplasm. In terms of biological role, modulates RecA activity. This is Regulatory protein RecX from Lacticaseibacillus paracasei (strain ATCC 334 / BCRC 17002 / CCUG 31169 / CIP 107868 / KCTC 3260 / NRRL B-441) (Lactobacillus paracasei).